The chain runs to 59 residues: MDTFTALTADEERFERHLAEQVWANSKVARAKFRRVAVAIYLLGAAMLSSGAAVLAYRL.

Residues 36-56 (VAVAIYLLGAAMLSSGAAVLA) form a helical membrane-spanning segment.

It localises to the cell membrane. Its function is as follows. Pycsar (pyrimidine cyclase system for antiphage resistance) provides immunity against bacteriophage. The pyrimidine cyclase (PycC) synthesizes cyclic nucleotides in response to infection; these serve as specific second messenger signals. The signals activate the adjacent effector, leading to bacterial cell death and abortive phage infection. A clade D Pycsar system. The effector gene of a two-gene Pycsar system. Expression of this and adjacent uridylate cyclase MePycC (AC A0A1C5G2V9) probably confers resistance to bacteriophage. The genes are probably only expressed in response to bacteriophage infection. Probably only responds to cUMP (produced by its cognate NTP cyclase), acts by impairing membrane integrity. In Micromonospora echinofusca, this protein is Pycsar effector protein MePycTM.